Here is a 1412-residue protein sequence, read N- to C-terminus: DNA-directed RNA polymerase subunit beta'' (1412 aa).

Zn(2+) is bound by residues Cys-220, Cys-294, Cys-301, and Cys-304.

It belongs to the RNA polymerase beta' chain family. RpoC2 subfamily. As to quaternary structure, in plastids the minimal PEP RNA polymerase catalytic core is composed of four subunits: alpha, beta, beta', and beta''. When a (nuclear-encoded) sigma factor is associated with the core the holoenzyme is formed, which can initiate transcription. It depends on Zn(2+) as a cofactor.

The protein localises to the plastid. The protein resides in the chloroplast. It carries out the reaction RNA(n) + a ribonucleoside 5'-triphosphate = RNA(n+1) + diphosphate. DNA-dependent RNA polymerase catalyzes the transcription of DNA into RNA using the four ribonucleoside triphosphates as substrates. The sequence is that of DNA-directed RNA polymerase subunit beta'' from Chara vulgaris (Common stonewort).